The primary structure comprises 443 residues: Deoxyguanosinetriphosphate triphosphohydrolase-like protein (443 aa).

The HD domain occupies 61–246 (RLTHSLEVAC…MEAADDICYG (186 aa)).

Belongs to the dGTPase family. Type 3 subfamily.

The chain is Deoxyguanosinetriphosphate triphosphohydrolase-like protein from Pseudomonas aeruginosa (strain LESB58).